Consider the following 682-residue polypeptide: Potassium-transporting ATPase ATP-binding subunit (682 aa).

The next 4 helical transmembrane spans lie at 34–54 (PVMF…IAMA), 62–82 (ALFS…ANFA), 219–239 (IALT…TATL), and 254–274 (VLVA…LSAI). D307 (4-aspartylphosphate intermediate) is an active-site residue. Residues D344, E348, 377-384 (FTAQSRMS), and K395 contribute to the ATP site. Residues D518 and D522 each coordinate Mg(2+). 3 consecutive transmembrane segments (helical) span residues 588-608 (FAII…LNIM), 616-636 (AILS…PLAL), and 656-676 (IYGL…DLLL).

The protein belongs to the cation transport ATPase (P-type) (TC 3.A.3) family. Type IA subfamily. As to quaternary structure, the system is composed of three essential subunits: KdpA, KdpB and KdpC.

It is found in the cell inner membrane. The enzyme catalyses K(+)(out) + ATP + H2O = K(+)(in) + ADP + phosphate + H(+). Functionally, part of the high-affinity ATP-driven potassium transport (or Kdp) system, which catalyzes the hydrolysis of ATP coupled with the electrogenic transport of potassium into the cytoplasm. This subunit is responsible for energy coupling to the transport system and for the release of the potassium ions to the cytoplasm. In Escherichia coli O157:H7 (strain EC4115 / EHEC), this protein is Potassium-transporting ATPase ATP-binding subunit.